The following is a 94-amino-acid chain: uncharacterized protein (94 aa).

It belongs to the phage portal family. HK97 subfamily.

This is an uncharacterized protein from Rickettsia conorii (strain ATCC VR-613 / Malish 7).